The chain runs to 367 residues: Alanine racemase (367 aa).

Lys-40 (proton acceptor; specific for D-alanine) is an active-site residue. N6-(pyridoxal phosphate)lysine is present on Lys-40. Arg-136 is a substrate binding site. Tyr-263 (proton acceptor; specific for L-alanine) is an active-site residue. Met-310 serves as a coordination point for substrate.

It belongs to the alanine racemase family. Pyridoxal 5'-phosphate serves as cofactor.

The enzyme catalyses L-alanine = D-alanine. It functions in the pathway amino-acid biosynthesis; D-alanine biosynthesis; D-alanine from L-alanine: step 1/1. Its function is as follows. Catalyzes the interconversion of L-alanine and D-alanine. May also act on other amino acids. This Streptococcus thermophilus (strain ATCC BAA-491 / LMD-9) protein is Alanine racemase (alr).